We begin with the raw amino-acid sequence, 270 residues long: tRNA pseudouridine synthase A (270 aa).

The active-site Nucleophile is the aspartate 60. Positions 107-111 (FHARF) are RNA binding. A substrate-binding site is contributed by tyrosine 118. Positions 168–172 (QCQSR) are interaction with tRNA.

It belongs to the tRNA pseudouridine synthase TruA family. Homodimer.

It catalyses the reaction uridine(38/39/40) in tRNA = pseudouridine(38/39/40) in tRNA. Its function is as follows. Formation of pseudouridine at positions 38, 39 and 40 in the anticodon stem and loop of transfer RNAs. The protein is tRNA pseudouridine synthase A of Escherichia fergusonii (strain ATCC 35469 / DSM 13698 / CCUG 18766 / IAM 14443 / JCM 21226 / LMG 7866 / NBRC 102419 / NCTC 12128 / CDC 0568-73).